The chain runs to 499 residues: Lysine--tRNA ligase (499 aa).

Residues glutamate 409 and glutamate 416 each coordinate Mg(2+).

Belongs to the class-II aminoacyl-tRNA synthetase family. In terms of assembly, homodimer. It depends on Mg(2+) as a cofactor.

The protein localises to the cytoplasm. It catalyses the reaction tRNA(Lys) + L-lysine + ATP = L-lysyl-tRNA(Lys) + AMP + diphosphate. This chain is Lysine--tRNA ligase, found in Pseudomonas fluorescens (strain Pf0-1).